A 699-amino-acid chain; its full sequence is Elongation factor G (699 aa).

One can recognise a tr-type G domain in the interval 8–289 (ERYRNIGISA…AVVEYMPAPT (282 aa)). GTP-binding positions include 17–24 (AHIDAGKT), 88–92 (DTPGH), and 142–145 (NKMD).

This sequence belongs to the TRAFAC class translation factor GTPase superfamily. Classic translation factor GTPase family. EF-G/EF-2 subfamily.

It is found in the cytoplasm. Its function is as follows. Catalyzes the GTP-dependent ribosomal translocation step during translation elongation. During this step, the ribosome changes from the pre-translocational (PRE) to the post-translocational (POST) state as the newly formed A-site-bound peptidyl-tRNA and P-site-bound deacylated tRNA move to the P and E sites, respectively. Catalyzes the coordinated movement of the two tRNA molecules, the mRNA and conformational changes in the ribosome. The polypeptide is Elongation factor G (Variovorax paradoxus (strain S110)).